Reading from the N-terminus, the 363-residue chain is Peptide chain release factor 1 (363 aa).

Position 237 is an N5-methylglutamine (Gln-237). Residues 281–302 (QQAEDEKSHAEEQTIRRSLVAS) are disordered. Residues 282-295 (QAEDEKSHAEEQTI) show a composition bias toward basic and acidic residues.

Belongs to the prokaryotic/mitochondrial release factor family. Post-translationally, methylated by PrmC. Methylation increases the termination efficiency of RF1.

It is found in the cytoplasm. Peptide chain release factor 1 directs the termination of translation in response to the peptide chain termination codons UAG and UAA. The sequence is that of Peptide chain release factor 1 from Psychromonas ingrahamii (strain DSM 17664 / CCUG 51855 / 37).